A 268-amino-acid chain; its full sequence is Tryptophan synthase alpha chain (268 aa).

Active-site proton acceptor residues include Glu49 and Asp60.

The protein belongs to the TrpA family. Tetramer of two alpha and two beta chains.

It carries out the reaction (1S,2R)-1-C-(indol-3-yl)glycerol 3-phosphate + L-serine = D-glyceraldehyde 3-phosphate + L-tryptophan + H2O. It functions in the pathway amino-acid biosynthesis; L-tryptophan biosynthesis; L-tryptophan from chorismate: step 5/5. Functionally, the alpha subunit is responsible for the aldol cleavage of indoleglycerol phosphate to indole and glyceraldehyde 3-phosphate. This chain is Tryptophan synthase alpha chain, found in Escherichia coli O157:H7.